The chain runs to 488 residues: UDP-N-acetylmuramate--L-alanine ligase (488 aa).

Position 127 to 133 (127 to 133 (GTHGKTT)) interacts with ATP.

This sequence belongs to the MurCDEF family.

It is found in the cytoplasm. It carries out the reaction UDP-N-acetyl-alpha-D-muramate + L-alanine + ATP = UDP-N-acetyl-alpha-D-muramoyl-L-alanine + ADP + phosphate + H(+). Its pathway is cell wall biogenesis; peptidoglycan biosynthesis. In terms of biological role, cell wall formation. This chain is UDP-N-acetylmuramate--L-alanine ligase, found in Shewanella sp. (strain MR-4).